A 221-amino-acid chain; its full sequence is Thiamine-phosphate synthase (221 aa).

4-amino-2-methyl-5-(diphosphooxymethyl)pyrimidine-binding positions include 44 to 48 and N79; that span reads QFREK. Mg(2+) is bound by residues D80 and D99. S117 is a 4-amino-2-methyl-5-(diphosphooxymethyl)pyrimidine binding site. Residue 143-145 participates in 2-[(2R,5Z)-2-carboxy-4-methylthiazol-5(2H)-ylidene]ethyl phosphate binding; sequence TSS. Residue K146 coordinates 4-amino-2-methyl-5-(diphosphooxymethyl)pyrimidine. Residues G175 and 195–196 contribute to the 2-[(2R,5Z)-2-carboxy-4-methylthiazol-5(2H)-ylidene]ethyl phosphate site; that span reads IS.

It belongs to the thiamine-phosphate synthase family. Requires Mg(2+) as cofactor.

The enzyme catalyses 2-[(2R,5Z)-2-carboxy-4-methylthiazol-5(2H)-ylidene]ethyl phosphate + 4-amino-2-methyl-5-(diphosphooxymethyl)pyrimidine + 2 H(+) = thiamine phosphate + CO2 + diphosphate. It catalyses the reaction 2-(2-carboxy-4-methylthiazol-5-yl)ethyl phosphate + 4-amino-2-methyl-5-(diphosphooxymethyl)pyrimidine + 2 H(+) = thiamine phosphate + CO2 + diphosphate. The catalysed reaction is 4-methyl-5-(2-phosphooxyethyl)-thiazole + 4-amino-2-methyl-5-(diphosphooxymethyl)pyrimidine + H(+) = thiamine phosphate + diphosphate. Its pathway is cofactor biosynthesis; thiamine diphosphate biosynthesis; thiamine phosphate from 4-amino-2-methyl-5-diphosphomethylpyrimidine and 4-methyl-5-(2-phosphoethyl)-thiazole: step 1/1. Its function is as follows. Condenses 4-methyl-5-(beta-hydroxyethyl)thiazole monophosphate (THZ-P) and 2-methyl-4-amino-5-hydroxymethyl pyrimidine pyrophosphate (HMP-PP) to form thiamine monophosphate (TMP). The polypeptide is Thiamine-phosphate synthase (Geobacillus kaustophilus (strain HTA426)).